The primary structure comprises 100 residues: NADH-quinone oxidoreductase subunit K (100 aa).

3 helical membrane passes run 4–24 (LSNYLIVSAVLFSIGTIGVLT), 29–49 (IVVFMCIELMLNAVNLTFVAF), and 60–80 (IFVFFIMTVAAAEAAVGLALF).

Belongs to the complex I subunit 4L family. As to quaternary structure, NDH-1 is composed of 14 different subunits. Subunits NuoA, H, J, K, L, M, N constitute the membrane sector of the complex.

It localises to the cell inner membrane. The enzyme catalyses a quinone + NADH + 5 H(+)(in) = a quinol + NAD(+) + 4 H(+)(out). Functionally, NDH-1 shuttles electrons from NADH, via FMN and iron-sulfur (Fe-S) centers, to quinones in the respiratory chain. The immediate electron acceptor for the enzyme in this species is believed to be ubiquinone. Couples the redox reaction to proton translocation (for every two electrons transferred, four hydrogen ions are translocated across the cytoplasmic membrane), and thus conserves the redox energy in a proton gradient. This chain is NADH-quinone oxidoreductase subunit K, found in Trichlorobacter lovleyi (strain ATCC BAA-1151 / DSM 17278 / SZ) (Geobacter lovleyi).